Reading from the N-terminus, the 1563-residue chain is Galactose-specific cell agglutination protein gsf2 (1563 aa).

The signal sequence occupies residues 1-27; that stretch reads MSVRRFLSTSARALLFTAALLPSLTSG. A run of 29 repeats spans residues 203–280, 281–358, 359–436, 437–514, 515–592, 593–670, 671–750, 751–825, 826–869, 870–913, 914–957, 958–1001, 1002–1045, 1046–1089, 1090–1133, 1134–1140, 1141–1162, 1163–1184, 1185–1200, 1201–1221, 1223–1244, 1245–1266, 1267–1282, 1283–1304, 1305–1326, 1327–1348, 1349–1364, 1365–1386, and 1387–1397. An 8 X 78 AA approximate tandem repeats region spans residues 203–825; sequence TTTTTVGYPG…IPTGTTGTTT (623 aa). Residues Asn224, Asn263, Asn302, Asn341, Asn380, Asn419, Asn458, Asn497, Asn536, Asn575, Asn614, and Asn653 are each glycosylated (N-linked (GlcNAc...) asparagine). A glycan (N-linked (GlcNAc...) asparagine) is linked at Asn784. Residues 826-1140 form an 8 X 44 AA approximate tandem repeats region; that stretch reads VVIQTPTTVT…TTTVVINTPT (315 aa). The segment at 1135 to 1393 is disordered; it reads VINTPTTTGS…TQVTTATEVQ (259 aa). A 13 X 22 AA approximate tandem repeats region spans residues 1141–1397; that stretch reads TTGSEVLPTT…TATEVQPTTA (257 aa). N-linked (GlcNAc...) asparagine glycosylation is found at Asn1510, Asn1516, Asn1529, and Asn1532. Residue Ser1539 is the site of GPI-anchor amidated serine attachment. Residues 1540–1563 constitute a propeptide, removed in mature form; that stretch reads SAGANKPIAYLTFVSLFVYIVTLI.

It belongs to the mam3/map4 family.

It is found in the cell membrane. Its function is as follows. Galactose-specific adhesion protein essential for non-sexual flocculation and filamentous growth. Required for adhesion and filamentous growth through recognition of galactose residues on cell surface glycoconjugates. Induces flocculation when overexpressed. The protein is Galactose-specific cell agglutination protein gsf2 of Schizosaccharomyces pombe (strain 972 / ATCC 24843) (Fission yeast).